The primary structure comprises 93 residues: Small ribosomal subunit protein uS19 (93 aa).

Belongs to the universal ribosomal protein uS19 family.

Its function is as follows. Protein S19 forms a complex with S13 that binds strongly to the 16S ribosomal RNA. The protein is Small ribosomal subunit protein uS19 of Desulfitobacterium hafniense (strain DSM 10664 / DCB-2).